The sequence spans 570 residues: Sulfite reductase [NADPH] hemoprotein beta-component (570 aa).

Positions 434, 440, 479, and 483 each coordinate [4Fe-4S] cluster. Residue Cys-483 coordinates siroheme.

It belongs to the nitrite and sulfite reductase 4Fe-4S domain family. As to quaternary structure, alpha(8)-beta(8). The alpha component is a flavoprotein, the beta component is a hemoprotein. It depends on siroheme as a cofactor. [4Fe-4S] cluster is required as a cofactor.

It carries out the reaction hydrogen sulfide + 3 NADP(+) + 3 H2O = sulfite + 3 NADPH + 4 H(+). It participates in sulfur metabolism; hydrogen sulfide biosynthesis; hydrogen sulfide from sulfite (NADPH route): step 1/1. Its function is as follows. Component of the sulfite reductase complex that catalyzes the 6-electron reduction of sulfite to sulfide. This is one of several activities required for the biosynthesis of L-cysteine from sulfate. In Salmonella paratyphi A (strain ATCC 9150 / SARB42), this protein is Sulfite reductase [NADPH] hemoprotein beta-component.